We begin with the raw amino-acid sequence, 155 residues long: Small ribosomal subunit protein uS9 (155 aa).

The protein belongs to the universal ribosomal protein uS9 family.

The chain is Small ribosomal subunit protein uS9 from Rhizobium leguminosarum bv. trifolii (strain WSM2304).